Here is a 481-residue protein sequence, read N- to C-terminus: 3-isopropylmalate dehydratase large subunit (481 aa).

[4Fe-4S] cluster-binding residues include cysteine 357, cysteine 417, and cysteine 420. Residues 429–441 (SPGQRCASTSNRN) show a composition bias toward polar residues. The disordered stretch occupies residues 429–451 (SPGQRCASTSNRNFEGRQGKGGR).

The protein belongs to the aconitase/IPM isomerase family. LeuC type 1 subfamily. Heterodimer of LeuC and LeuD. Requires [4Fe-4S] cluster as cofactor.

The enzyme catalyses (2R,3S)-3-isopropylmalate = (2S)-2-isopropylmalate. Its pathway is amino-acid biosynthesis; L-leucine biosynthesis; L-leucine from 3-methyl-2-oxobutanoate: step 2/4. In terms of biological role, catalyzes the isomerization between 2-isopropylmalate and 3-isopropylmalate, via the formation of 2-isopropylmaleate. In Mycobacterium sp. (strain JLS), this protein is 3-isopropylmalate dehydratase large subunit.